A 532-amino-acid chain; its full sequence is BTB/POZ domain-containing protein 3 (532 aa).

A disordered region spans residues 23 to 54 (KNRSKKSSKKTNTGGGGGGSSSSSSSSSNSKL). The span at 43–53 (SSSSSSSSNSK) shows a compositional bias: low complexity. Residues 130-200 (ADVHFVVGPP…IYCDEIDLAA (71 aa)) form the BTB domain. The 66-residue stretch at 245–310 (FEEPDLTQRC…NWAEVECQRQ (66 aa)) folds into the BACK domain.

In terms of tissue distribution, expressed in visual cortex. Expressed in visual cortex layer IV neurons.

The protein resides in the cytoplasm. The protein localises to the cytosol. It is found in the nucleus. Functionally, acts as a key regulator of dendritic field orientation during development of sensory cortex. Also directs dendrites toward active axon terminals when ectopically expressed. The polypeptide is BTB/POZ domain-containing protein 3 (BTBD3) (Mustela putorius furo (European domestic ferret)).